The chain runs to 944 residues: Neutral alpha-glucosidase AB (944 aa).

A signal peptide spans 1 to 28 (MAAVAAVAARRRRSWASLVLAFLGVCLG). Cys-41 and Cys-47 are disulfide-bonded. Ser-52 is subject to Phosphoserine. Asn-97 carries N-linked (GlcNAc...) asparagine glycosylation. Residues 181-238 (QRAPRVSQGSKDPAEGDGAQPEETPRDGDKPEETQGKAEKDEPGAWEETFKTHSDSKP) form a disordered region. Residues 203-236 (ETPRDGDKPEETQGKAEKDEPGAWEETFKTHSDS) are compositionally biased toward basic and acidic residues. The substrate site is built by Asp-283 and Asp-429. Asp-542 (nucleophile) is an active-site residue. Arg-602 provides a ligand contact to substrate. The active-site Proton donor is the Asp-618. An intrachain disulfide couples Cys-633 to Cys-644. His-676 contributes to the substrate binding site.

Belongs to the glycosyl hydrolase 31 family. As to quaternary structure, heterodimer of a catalytic alpha subunit (GANAB) and a beta subunit (PRKCSH). Binds glycosylated PTPRC. Detected in placenta. Isoform 1 and isoform 2 are expressed in the kidney and liver.

The protein resides in the endoplasmic reticulum. The protein localises to the golgi apparatus. It localises to the melanosome. The enzyme catalyses N(4)-(alpha-D-Glc-(1-&gt;3)-alpha-D-Man-(1-&gt;2)-alpha-D-Man-(1-&gt;2)-alpha-D-Man-(1-&gt;3)-[alpha-D-Man-(1-&gt;2)-alpha-D-Man-(1-&gt;3)-[alpha-D-Man-(1-&gt;2)-alpha-D-Man-(1-&gt;6)]-alpha-D-Man-(1-&gt;6)]-beta-D-Man-(1-&gt;4)-beta-D-GlcNAc-(1-&gt;4)-beta-D-GlcNAc)-L-asparaginyl-[protein] + H2O = N(4)-(alpha-D-Man-(1-&gt;2)-alpha-D-Man-(1-&gt;2)-alpha-D-Man-(1-&gt;3)-[alpha-D-Man-(1-&gt;2)-alpha-D-Man-(1-&gt;3)-[alpha-D-Man-(1-&gt;2)-alpha-D-Man-(1-&gt;6)]-alpha-D-Man-(1-&gt;6)]-beta-D-Man-(1-&gt;4)-beta-D-GlcNAc-(1-&gt;4)-beta-D-GlcNAc)-L-asparaginyl-[protein] (N-glucan mannose isomer 9A1,2,3B1,2,3) + beta-D-glucose. The catalysed reaction is N(4)-(alpha-D-Glc-(1-&gt;3)-alpha-D-Glc-(1-&gt;3)-alpha-D-Man-(1-&gt;2)-alpha-D-Man-(1-&gt;2)-alpha-D-Man-(1-&gt;3)-[alpha-D-Man-(1-&gt;2)-alpha-D-Man-(1-&gt;3)-[alpha-D-Man-(1-&gt;2)-alpha-D-Man-(1-&gt;6)]-alpha-D-Man-(1-&gt;6)]-beta-D-Man-(1-&gt;4)-beta-D-GlcNAc-(1-&gt;4)-beta-D-GlcNAc)-L-asparaginyl-[protein] + H2O = N(4)-(alpha-D-Glc-(1-&gt;3)-alpha-D-Man-(1-&gt;2)-alpha-D-Man-(1-&gt;2)-alpha-D-Man-(1-&gt;3)-[alpha-D-Man-(1-&gt;2)-alpha-D-Man-(1-&gt;3)-[alpha-D-Man-(1-&gt;2)-alpha-D-Man-(1-&gt;6)]-alpha-D-Man-(1-&gt;6)]-beta-D-Man-(1-&gt;4)-beta-D-GlcNAc-(1-&gt;4)-beta-D-GlcNAc)-L-asparaginyl-[protein] + beta-D-glucose. It participates in glycan metabolism; N-glycan metabolism. With respect to regulation, inhibited by deoxynojirimycin. Its function is as follows. Catalytic subunit of glucosidase II that cleaves sequentially the 2 innermost alpha-1,3-linked glucose residues from the Glc(2)Man(9)GlcNAc(2) oligosaccharide precursor of immature glycoproteins. Required for PKD1/Polycystin-1 and PKD2/Polycystin-2 maturation and localization to the cell surface and cilia. In Homo sapiens (Human), this protein is Neutral alpha-glucosidase AB.